The chain runs to 230 residues: Prolactin-6A1 (230 aa).

Positions 1–29 are cleaved as a signal peptide; it reads MLSLSQPCFSGTLLMLLASNFLLWKNVAP. A glycan (N-linked (GlcNAc...) asparagine) is linked at Asn57. Intrachain disulfides connect Cys89/Cys205 and Cys222/Cys230.

The protein belongs to the somatotropin/prolactin family. As to expression, expressed in both placenta and decidual tissues. Detected first in deciduals cells early in gestation and in trophoblasts later in pregnancy.

It localises to the secreted. This is Prolactin-6A1 (Prl6a1) from Mus musculus (Mouse).